Reading from the N-terminus, the 77-residue chain is MPKKVFCGVVTKAKCDKTVKVSVLRVYKDKLYKKVIKRYKEYTVHDENNSCKEGDKVFIQEHRPISATKKWVIVRVE.

Belongs to the universal ribosomal protein uS17 family. As to quaternary structure, part of the 30S ribosomal subunit.

One of the primary rRNA binding proteins, it binds specifically to the 5'-end of 16S ribosomal RNA. This Wolbachia sp. subsp. Brugia malayi (strain TRS) protein is Small ribosomal subunit protein uS17.